A 179-amino-acid polypeptide reads, in one-letter code: Large ribosomal subunit protein uL5 (179 aa).

It belongs to the universal ribosomal protein uL5 family. As to quaternary structure, part of the 50S ribosomal subunit; part of the 5S rRNA/L5/L18/L25 subcomplex. Contacts the 5S rRNA and the P site tRNA. Forms a bridge to the 30S subunit in the 70S ribosome.

Functionally, this is one of the proteins that bind and probably mediate the attachment of the 5S RNA into the large ribosomal subunit, where it forms part of the central protuberance. In the 70S ribosome it contacts protein S13 of the 30S subunit (bridge B1b), connecting the 2 subunits; this bridge is implicated in subunit movement. Contacts the P site tRNA; the 5S rRNA and some of its associated proteins might help stabilize positioning of ribosome-bound tRNAs. The sequence is that of Large ribosomal subunit protein uL5 from Prochlorococcus marinus (strain SARG / CCMP1375 / SS120).